The chain runs to 329 residues: 2-oxoglutarate-dependent dioxygenase htyE (329 aa).

The region spanning 175–289 (NTSELRLLHY…RYSVAYFGKP (115 aa)) is the Fe2OG dioxygenase domain. His201, Asp203, and His261 together coordinate Fe cation. Arg280 provides a ligand contact to 2-oxoglutarate.

The protein belongs to the iron/ascorbate-dependent oxidoreductase family. It depends on Fe(2+) as a cofactor.

The protein operates within antifungal biosynthesis. 2-oxoglutarate-dependent dioxygenase; part of the gene cluster that mediates the de novo generation of L-homotyrosine from acetyl-CoA and 4-hydroxyphenyl-pyruvate. L-homotyrosine is a building block of echinocandin B, a fungal lipidated cyclic hexapeptide that acts as an antifungal agent. L-homotyrosine 4-hydroxyphenyl-pyruvate first undergoes an aldol-type condensation by htyA with the C-2 of acetyl-CoA followed by the release of CoA to form 2-(4-hydroxybenzyl)-malate. This is followed by isomerization of 2-(4-hydroxy-benzyl)-malate to 3-(4-hydroxybenzyl)-malate by htyD. Thereafter, 3-(4-hydroxybenzyl)-malate undergoes decarboxylation and oxidation to form 2-oxo-4-(4-hydroxybenzyl)butanoic acid, coupled to reduction of NAD(+) to NADH by htyC. The product then undergoes transamination catalyzed by htyB to form L-homotyrosine. The chain is 2-oxoglutarate-dependent dioxygenase htyE from Aspergillus rugulosus (Emericella rugulosa).